A 415-amino-acid chain; its full sequence is ATP-dependent Clp protease ATP-binding subunit ClpX (415 aa).

The ClpX-type ZB domain occupies 1–54 (MARNRMGGALICSFCNKPESSERFVVPGPGGIAICDRCVDLCESYIKSYKTVRP). The Zn(2+) site is built by cysteine 12, cysteine 15, cysteine 35, and cysteine 38. ATP is bound at residue 117–124 (PTGSGKTL).

It belongs to the ClpX chaperone family. Component of the ClpX-ClpP complex. Forms a hexameric ring that, in the presence of ATP, binds to fourteen ClpP subunits assembled into a disk-like structure with a central cavity, resembling the structure of eukaryotic proteasomes.

Functionally, ATP-dependent specificity component of the Clp protease. It directs the protease to specific substrates. Can perform chaperone functions in the absence of ClpP. This chain is ATP-dependent Clp protease ATP-binding subunit ClpX, found in Treponema denticola (strain ATCC 35405 / DSM 14222 / CIP 103919 / JCM 8153 / KCTC 15104).